A 148-amino-acid chain; its full sequence is Large ribosomal subunit protein uL15 (148 aa).

Residues 1-30 show a composition bias toward basic residues; sequence MPSRLRKTRKLRGHVSHGHGRIGKHRKHPG. Residues 1–39 form a disordered region; that stretch reads MPSRLRKTRKLRGHVSHGHGRIGKHRKHPGGRGNAGGLH. A (3S)-3-hydroxyhistidine modification is found at His-39. Lys-47 and Lys-55 each carry N6-acetyllysine. Ser-68 carries the post-translational modification Phosphoserine. Lys-110 carries the N6-acetyllysine modification.

The protein belongs to the universal ribosomal protein uL15 family. In terms of assembly, component of the large ribosomal subunit. Hydroxylated on His-39 by MINA.

Its subcellular location is the cytoplasm. Component of the large ribosomal subunit. The ribosome is a large ribonucleoprotein complex responsible for the synthesis of proteins in the cell. This is Large ribosomal subunit protein uL15 (RPL27A) from Macaca fascicularis (Crab-eating macaque).